The sequence spans 333 residues: Procathepsin L (333 aa).

The first 17 residues, 1-17 (MNPTLILAAFCLGIASA), serve as a signal peptide directing secretion. A propeptide spans 18 to 113 (TLTFDHSLEA…KVFQEPLFYE (96 aa)) (activation peptide). Zn(2+) is bound at residue Glu122. 2 cysteine pairs are disulfide-bonded: Cys135-Cys178 and Cys169-Cys211. Cys138 is a catalytic residue. Residues Glu163, Asp184, Glu199, Glu205, and Glu209 each contribute to the Zn(2+) site. N-linked (GlcNAc...) asparagine glycosylation occurs at Asn221. Positions 227, 250, 253, 273, and 275 each coordinate Zn(2+). The cysteines at positions 269 and 322 are disulfide-linked. Residue His276 is part of the active site. The propeptide occupies 289 to 291 (ESD). The active site involves Asn300.

Belongs to the peptidase C1 family. In terms of assembly, dimer of a heavy and a light chain linked by disulfide bonds. Interacts with Long isoform of CD74/Ii chain; the interaction stabilizes the conformation of mature CTSL. Post-translationally, during export along the endocytic pathway, pro-CTSL undergoes several proteolytic cleavages to generate the CTSL single-chain and two-chain mature forms, composed of a heavy chain linked to a light chain by disulfide bonds. Autocleavage; produces the single-chain CTSL after cleavage of the propeptide. The cleavage can be intermolecular.

The protein resides in the lysosome. It is found in the apical cell membrane. The protein localises to the cytoplasmic vesicle. It localises to the secretory vesicle. Its subcellular location is the chromaffin granule. The protein resides in the secreted. It is found in the extracellular space. The protein localises to the nucleus. The catalysed reaction is Specificity close to that of papain. As compared to cathepsin B, cathepsin L exhibits higher activity toward protein substrates, but has little activity on Z-Arg-Arg-NHMec, and no peptidyl-dipeptidase activity.. Its activity is regulated as follows. Inhibited by the propeptide produced by autocleavage. Long isoform of CD74/Ii chain stabilizes the conformation of mature CTSL by binding to its active site and serving as a chaperone to help maintain a pool of mature enzyme in endocytic compartments and extracellular space of APCs. IFNG enhances the conversion into the CTSL mature and active form. Inhibited by CST6. Inhibited by the glycopeptide antibiotic teicoplanin. Inhibited by amantadine. Thiol protease important for the overall degradation of proteins in lysosomes. Plays a critical for normal cellular functions such as general protein turnover, antigen processing and bone remodeling. Involved in the solubilization of cross-linked TG/thyroglobulin and in the subsequent release of thyroid hormone thyroxine (T4) by limited proteolysis of TG/thyroglobulin in the thyroid follicle lumen. In neuroendocrine chromaffin cells secretory vesicles, catalyzes the prohormone proenkephalin processing to the active enkephalin peptide neurotransmitter. In thymus, regulates CD4(+) T cell positive selection by generating the major histocompatibility complex class II (MHCII) bound peptide ligands presented by cortical thymic epithelial cells. Also mediates invariant chain processing in cortical thymic epithelial cells. Major elastin-degrading enzyme at neutral pH. Accumulates as a mature and active enzyme in the extracellular space of antigen presenting cells (APCs) to regulate degradation of the extracellular matrix in the course of inflammation. Secreted form generates endostatin from COL18A1. Critical for cardiac morphology and function. Plays an important role in hair follicle morphogenesis and cycling, as well as epidermal differentiation. Required for maximal stimulation of steroidogenesis by TIMP1. Functionally, (Microbial infection) In cells lacking TMPRSS2 expression, facilitates human coronaviruses SARS-CoV and SARS-CoV-2 infections via a slow acid-activated route with the proteolysis of coronavirus spike (S) glycoproteins in lysosome for entry into host cell. Proteolysis within lysosomes is sufficient to activate membrane fusion by coronaviruses SARS-CoV and EMC (HCoV-EMC) S as well as Zaire ebolavirus glycoproteins. In terms of biological role, functions in the regulation of cell cycle progression through proteolytic processing of the CUX1 transcription factor. Translation initiation at downstream start sites allows the synthesis of isoforms that are devoid of a signal peptide and localize to the nucleus where they cleave the CUX1 transcription factor and modify its DNA binding properties. This Homo sapiens (Human) protein is Procathepsin L.